Consider the following 215-residue polypeptide: Pyrrolidone-carboxylate peptidase (215 aa).

Residues E80, C143, and H167 contribute to the active site.

Belongs to the peptidase C15 family. In terms of assembly, homotetramer.

It localises to the cytoplasm. It catalyses the reaction Release of an N-terminal pyroglutamyl group from a polypeptide, the second amino acid generally not being Pro.. Removes 5-oxoproline from various penultimate amino acid residues except L-proline. The sequence is that of Pyrrolidone-carboxylate peptidase from Yersinia pseudotuberculosis serotype O:1b (strain IP 31758).